The primary structure comprises 357 residues: Protein RecA (357 aa).

67–74 is a binding site for ATP; it reads GPESSGKT. Residues 333-357 form a disordered region; the sequence is NELTPATAGNSHDEDAFADEGNEEF. A compositionally biased stretch (acidic residues) spans 348–357; it reads AFADEGNEEF.

It belongs to the RecA family.

Its subcellular location is the cytoplasm. Can catalyze the hydrolysis of ATP in the presence of single-stranded DNA, the ATP-dependent uptake of single-stranded DNA by duplex DNA, and the ATP-dependent hybridization of homologous single-stranded DNAs. It interacts with LexA causing its activation and leading to its autocatalytic cleavage. The protein is Protein RecA of Pectobacterium carotovorum subsp. carotovorum (strain PC1).